Reading from the N-terminus, the 252-residue chain is Phosphoribosylaminoimidazole-succinocarboxamide synthase 1 (252 aa).

Belongs to the SAICAR synthetase family.

The enzyme catalyses 5-amino-1-(5-phospho-D-ribosyl)imidazole-4-carboxylate + L-aspartate + ATP = (2S)-2-[5-amino-1-(5-phospho-beta-D-ribosyl)imidazole-4-carboxamido]succinate + ADP + phosphate + 2 H(+). Its pathway is purine metabolism; IMP biosynthesis via de novo pathway; 5-amino-1-(5-phospho-D-ribosyl)imidazole-4-carboxamide from 5-amino-1-(5-phospho-D-ribosyl)imidazole-4-carboxylate: step 1/2. The protein is Phosphoribosylaminoimidazole-succinocarboxamide synthase 1 (purC1) of Caulobacter vibrioides (strain ATCC 19089 / CIP 103742 / CB 15) (Caulobacter crescentus).